Here is a 319-residue protein sequence, read N- to C-terminus: Methionyl-tRNA formyltransferase (319 aa).

S115–P118 is a binding site for (6S)-5,6,7,8-tetrahydrofolate.

This sequence belongs to the Fmt family.

The enzyme catalyses L-methionyl-tRNA(fMet) + (6R)-10-formyltetrahydrofolate = N-formyl-L-methionyl-tRNA(fMet) + (6S)-5,6,7,8-tetrahydrofolate + H(+). In terms of biological role, attaches a formyl group to the free amino group of methionyl-tRNA(fMet). The formyl group appears to play a dual role in the initiator identity of N-formylmethionyl-tRNA by promoting its recognition by IF2 and preventing the misappropriation of this tRNA by the elongation apparatus. This Lactococcus lactis subsp. lactis (strain IL1403) (Streptococcus lactis) protein is Methionyl-tRNA formyltransferase.